The primary structure comprises 349 residues: sn-glycerol-3-phosphate import ATP-binding protein UgpC (349 aa).

Positions 4-235 (VTLTAVRKVY…PASTFVASFM (232 aa)) constitute an ABC transporter domain. Residue 37 to 44 (GPSGCGKS) participates in ATP binding.

The protein belongs to the ABC transporter superfamily. sn-glycerol-3-phosphate importer (TC 3.A.1.1.3) family. In terms of assembly, the complex is composed of two ATP-binding proteins (UgpC), two transmembrane proteins (UgpA and UgpE) and a solute-binding protein (UgpB).

It is found in the cell inner membrane. It carries out the reaction sn-glycerol 3-phosphate(out) + ATP + H2O = sn-glycerol 3-phosphate(in) + ADP + phosphate + H(+). Its function is as follows. Part of the ABC transporter complex UgpBAEC involved in sn-glycerol-3-phosphate (G3P) import. Responsible for energy coupling to the transport system. The chain is sn-glycerol-3-phosphate import ATP-binding protein UgpC from Jannaschia sp. (strain CCS1).